The sequence spans 466 residues: Cysteine--tRNA ligase (466 aa).

Cys27 is a binding site for Zn(2+). A 'HIGH' region motif is present at residues 29–39 (PTVYDLAHIGN). Cys211, His236, and Glu240 together coordinate Zn(2+). A 'KMSKS' region motif is present at residues 270–274 (KMSKS). An ATP-binding site is contributed by Lys273.

Belongs to the class-I aminoacyl-tRNA synthetase family. In terms of assembly, monomer. Zn(2+) is required as a cofactor.

The protein resides in the cytoplasm. It carries out the reaction tRNA(Cys) + L-cysteine + ATP = L-cysteinyl-tRNA(Cys) + AMP + diphosphate. The sequence is that of Cysteine--tRNA ligase from Anaplasma marginale (strain St. Maries).